Reading from the N-terminus, the 201-residue chain is Probable nicotinate-nucleotide adenylyltransferase (201 aa).

Belongs to the NadD family.

The catalysed reaction is nicotinate beta-D-ribonucleotide + ATP + H(+) = deamido-NAD(+) + diphosphate. The protein operates within cofactor biosynthesis; NAD(+) biosynthesis; deamido-NAD(+) from nicotinate D-ribonucleotide: step 1/1. Its function is as follows. Catalyzes the reversible adenylation of nicotinate mononucleotide (NaMN) to nicotinic acid adenine dinucleotide (NaAD). This is Probable nicotinate-nucleotide adenylyltransferase from Carboxydothermus hydrogenoformans (strain ATCC BAA-161 / DSM 6008 / Z-2901).